The following is a 1106-amino-acid chain: DNA polymerase delta catalytic subunit (1106 aa).

The segment at 1 to 28 (MDGKRRPGPGPGVPPKRARGGLWDEDEA) is disordered. Positions 4–19 (KRRPGPGPGVPPKRAR) match the Nuclear localization signal motif. Residue Arg-19 is modified to Omega-N-methylarginine. Residue Lys-573 forms a Glycyl lysine isopeptide (Lys-Gly) (interchain with G-Cter in SUMO2) linkage. Zn(2+)-binding residues include Cys-1011, Cys-1014, Cys-1025, and Cys-1028. The segment at 1011 to 1028 (CIGCRTVLSHQGAVCKFC) adopts a CysA-type zinc-finger fold. Residues Cys-1057, Cys-1060, Cys-1070, and Cys-1075 each coordinate [4Fe-4S] cluster. The CysB motif motif lies at 1057 to 1075 (CQRCQGSLHEDVICTSRDC).

This sequence belongs to the DNA polymerase type-B family. In terms of assembly, component of the tetrameric DNA polymerase delta complex (Pol-delta4), which consists of POLD1/p125, POLD2/p50, POLD3/p66/p68 and POLD4/p12, with POLD1 bearing both DNA polymerase and 3' to 5' proofreading exonuclease activities. Within Pol-delta4, directly interacts with POLD2 and POLD4. Following genotoxic stress by DNA-damaging agents, such as ultraviolet light and methyl methanesulfonate, or by replication stress induced by treatment with hydroxyurea or aphidicolin, Pol-delta4 is converted into a trimeric form of the complex (Pol-delta3) by POLD4 degradation. Pol-delta3 is the major form at S phase replication sites and DNA damage sites. POLD1 displays different catalytic properties depending upon the complex it is found in. It exhibits higher proofreading activity and fidelity than Pol-delta4, making it particularly well suited to respond to DNA damage. Directly interacts with PCNA, as do POLD3 and POLD4; this interaction stimulates Pol-delta4 polymerase activity. As POLD2 and POLD4, directly interacts with WRNIP1; this interaction stimulates DNA polymerase delta-mediated DNA synthesis, independently of the presence of PCNA. This stimulation may be due predominantly to an increase of initiation frequency and also to increased processivity. Also observed as a dimeric complex with POLD2 (Pol-delta2). Pol-delta2 is relatively insensitive to the PCNA stimulation (2-5-fold) compared to Pol-delta4 that is stimulated by over 50-fold. Interacts with POLDIP2; this interaction is indirect and most probably mediated through POLD2-binding. Interacts with CIAO1. Interacts with POLDIP2. Interacts with RFC1. Requires [4Fe-4S] cluster as cofactor.

It is found in the nucleus. It catalyses the reaction DNA(n) + a 2'-deoxyribonucleoside 5'-triphosphate = DNA(n+1) + diphosphate. Regulated by alteration of quaternary structure. Exhibits burst rates of DNA synthesis are about 5 times faster in the presence of POLD4 (Pol-delta4 complex) than in its absence (Pol-delta3 complex), while the affinity of the enzyme for its DNA and dNTP substrates appears unchanged. The Pol-delta3 complex is more likely to proofread DNA synthesis because it cleaves single-stranded DNA twice as fast and transfers mismatched DNA from the polymerase to the exonuclease sites 9 times faster compared to the Pol-delta3 complex. Pol-delta3 also extends mismatched primers 3 times more slowly in the absence of POLD4. The conversion of Pol-delta4 into Pol-delta3 is induced by genotoxic stress or by replication stress leading POLD4 degradation. Stimulated in the presence of PCNA. This stimulation is further increased in the presence of KCTD13/PDIP1, most probably via direct interaction between KCTD13 and POLD2. Functionally, as the catalytic component of the trimeric (Pol-delta3 complex) and tetrameric DNA polymerase delta complexes (Pol-delta4 complex), plays a crucial role in high fidelity genome replication, including in lagging strand synthesis, and repair. Exhibits both DNA polymerase and 3'- to 5'-exonuclease activities. Requires the presence of accessory proteins POLD2, POLD3 and POLD4 for full activity. Depending upon the absence (Pol-delta3) or the presence of POLD4 (Pol-delta4), displays differences in catalytic activity. Most notably, expresses higher proofreading activity in the context of Pol-delta3 compared with that of Pol-delta4. Although both Pol-delta3 and Pol-delta4 process Okazaki fragments in vitro, Pol-delta3 may be better suited to fulfill this task, exhibiting near-absence of strand displacement activity compared to Pol-delta4 and stalling on encounter with the 5'-blocking oligonucleotides. Pol-delta3 idling process may avoid the formation of a gap, while maintaining a nick that can be readily ligated. Along with DNA polymerase kappa, DNA polymerase delta carries out approximately half of nucleotide excision repair (NER) synthesis following UV irradiation. Under conditions of DNA replication stress, in the presence of POLD3 and POLD4, may catalyze the repair of broken replication forks through break-induced replication (BIR). Involved in the translesion synthesis (TLS) of templates carrying O6-methylguanine, 8oxoG or abasic sites. This is DNA polymerase delta catalytic subunit (POLD1) from Bos taurus (Bovine).